Reading from the N-terminus, the 286-residue chain is Pyridoxal kinase PdxY (286 aa).

Residues serine 9 and 44–45 each bind substrate; that span reads MQ. Residues aspartate 111, glutamate 147, and lysine 180 each coordinate ATP. Aspartate 221 lines the substrate pocket.

This sequence belongs to the pyridoxine kinase family. PdxY subfamily. Homodimer. It depends on Mg(2+) as a cofactor.

It carries out the reaction pyridoxal + ATP = pyridoxal 5'-phosphate + ADP + H(+). The protein operates within cofactor metabolism; pyridoxal 5'-phosphate salvage; pyridoxal 5'-phosphate from pyridoxal: step 1/1. Pyridoxal kinase involved in the salvage pathway of pyridoxal 5'-phosphate (PLP). Catalyzes the phosphorylation of pyridoxal to PLP. In Burkholderia orbicola (strain AU 1054), this protein is Pyridoxal kinase PdxY.